The following is a 199-amino-acid chain: HTH-type transcriptional regulator BetI (199 aa).

The HTH tetR-type domain maps to 8-68 (EIRKPQLVKA…ETMREILRQL (61 aa)). Positions 31–50 (SISLISKEAGVSTGIINHYF) form a DNA-binding region, H-T-H motif.

It participates in amine and polyamine biosynthesis; betaine biosynthesis via choline pathway [regulation]. Functionally, repressor involved in the biosynthesis of the osmoprotectant glycine betaine. It represses transcription of the choline transporter BetT and the genes of BetAB involved in the synthesis of glycine betaine. In Vibrio parahaemolyticus serotype O3:K6 (strain RIMD 2210633), this protein is HTH-type transcriptional regulator BetI.